Here is a 255-residue protein sequence, read N- to C-terminus: Syntaxin-23 (255 aa).

Residues 1–31 are disordered; the sequence is MSFQDLEAGRGRSLASSRNINGGGSRQDTTQ. S2 is modified (N-acetylserine). Residues 14–31 are compositionally biased toward polar residues; sequence LASSRNINGGGSRQDTTQ. The region spanning 184–246 is the t-SNARE coiled-coil homology domain; the sequence is EAVIEEREQG…AQGKSHLVRH (63 aa).

This sequence belongs to the syntaxin family. Part of the t-SNARE complex. Interacts with RGS1. In terms of tissue distribution, expressed at higher levels in leaves, flowers and stems than in roots.

It is found in the membrane. In terms of biological role, may function in the docking or fusion of transport vesicles with the prevacuolar membrane. The chain is Syntaxin-23 (SYP23) from Arabidopsis thaliana (Mouse-ear cress).